The sequence spans 325 residues: Lipoyl synthase (325 aa).

The interval 1–32 is disordered; it reads MPPLADASTETLSPAEQAAVRHPEKAHRPDQP. Over residues 19 to 32 the composition is skewed to basic and acidic residues; the sequence is AVRHPEKAHRPDQP. [4Fe-4S] cluster-binding residues include cysteine 66, cysteine 71, cysteine 77, cysteine 92, cysteine 96, cysteine 99, and serine 305. A Radical SAM core domain is found at 78 to 294; that stretch reads WAKKHATFMI…AEVANAKGFL (217 aa).

Belongs to the radical SAM superfamily. Lipoyl synthase family. [4Fe-4S] cluster is required as a cofactor.

The protein resides in the cytoplasm. The enzyme catalyses [[Fe-S] cluster scaffold protein carrying a second [4Fe-4S](2+) cluster] + N(6)-octanoyl-L-lysyl-[protein] + 2 oxidized [2Fe-2S]-[ferredoxin] + 2 S-adenosyl-L-methionine + 4 H(+) = [[Fe-S] cluster scaffold protein] + N(6)-[(R)-dihydrolipoyl]-L-lysyl-[protein] + 4 Fe(3+) + 2 hydrogen sulfide + 2 5'-deoxyadenosine + 2 L-methionine + 2 reduced [2Fe-2S]-[ferredoxin]. It participates in protein modification; protein lipoylation via endogenous pathway; protein N(6)-(lipoyl)lysine from octanoyl-[acyl-carrier-protein]: step 2/2. Functionally, catalyzes the radical-mediated insertion of two sulfur atoms into the C-6 and C-8 positions of the octanoyl moiety bound to the lipoyl domains of lipoate-dependent enzymes, thereby converting the octanoylated domains into lipoylated derivatives. The protein is Lipoyl synthase of Beijerinckia indica subsp. indica (strain ATCC 9039 / DSM 1715 / NCIMB 8712).